Reading from the N-terminus, the 407-residue chain is MSSTVKKTGVKKVVLAYSGGLDTSAIIPWLKETYDDCEIVAFCADVGQGEEELVGLTEKALASGASECHIVDLKEEFVKDYIYPTIATGAIYEGTYLLGTSMARPIIAKAQVEVARKVGADALCHGCTGKGNDQVRFEGCFAALAPDLKVIAPWREWEMRSREDLLAYLAARDIQTSASATKIYSRDANAWHISHEGGELEDPWNEPSKGVWTLTVAPEDAPDEAEYVALSIKHGRVTHVNEQVLSPYNALMKLNDIASKHGVGRIDITENRLVGMKSRGCYETPGGTVMFAGLRAIEELVLDKTSRTWREQVAAQMAHLVYDGRWFTPLCNSLLAASESLAEAVNGDVVIKLYKGQATAVKKRSPNSLYSESFATFGEDDVYDQKHAEGFIRLYSLASRIRAMNSN.

ATP is bound by residues 16-24 (AYSGGLDTS) and alanine 44. L-citrulline-binding residues include tyrosine 96 and serine 101. Glycine 126 lines the ATP pocket. The L-aspartate site is built by threonine 128, asparagine 132, and aspartate 133. L-citrulline is bound at residue asparagine 132. L-citrulline-binding residues include arginine 136, serine 185, serine 194, glutamate 270, and tyrosine 282.

The protein belongs to the argininosuccinate synthase family. Type 1 subfamily. As to quaternary structure, homotetramer.

The protein localises to the cytoplasm. It carries out the reaction L-citrulline + L-aspartate + ATP = 2-(N(omega)-L-arginino)succinate + AMP + diphosphate + H(+). The protein operates within amino-acid biosynthesis; L-arginine biosynthesis; L-arginine from L-ornithine and carbamoyl phosphate: step 2/3. The sequence is that of Argininosuccinate synthase from Shewanella denitrificans (strain OS217 / ATCC BAA-1090 / DSM 15013).